The sequence spans 234 residues: UPF0104 membrane protein MJ1078 (234 aa).

Helical transmembrane passes span 32–52 (VGTV…LLFI), 70–90 (IKWG…FLIV), 123–143 (LITL…FIFL), 164–184 (LTAI…LIYI), and 198–218 (VLIL…AIMF).

This sequence belongs to the UPF0104 family.

It is found in the cell membrane. This Methanocaldococcus jannaschii (strain ATCC 43067 / DSM 2661 / JAL-1 / JCM 10045 / NBRC 100440) (Methanococcus jannaschii) protein is UPF0104 membrane protein MJ1078.